Reading from the N-terminus, the 180-residue chain is Stathmin-3 (180 aa).

Residues Cys22 and Cys24 are each lipidated (S-palmitoyl cysteine). Residues 38-180 (GDMEVKQLDK…NKEQREEMSG (143 aa)) form the SLD domain. Phosphoserine is present on residues Ser50, Ser60, Ser65, Ser68, Ser72, Ser73, and Ser81. The interval 59-82 (KSPSDLSPESPMLSSPPKKKDTSL) is disordered. Over residues 60 to 74 (SPSDLSPESPMLSSP) the composition is skewed to low complexity. A coiled-coil region spans residues 76 to 179 (KKKDTSLEEL…RNKEQREEMS (104 aa)).

This sequence belongs to the stathmin family. Interacts with STAT3. Interacts with CLU (secreted form); this interaction may act as an important modulator during neuronal differentiation. N-terminal palmitoylation promotes specific anchoring to the cytosolic leaflet of Golgi membranes and subsequent vesicular trafficking along dendrites and axons. Neuronal Stathmins are substrates for palmitoyltransferases ZDHHC3, ZDHHC7 and ZDHHC15.

The protein resides in the golgi apparatus. The protein localises to the cell projection. Its subcellular location is the growth cone. It is found in the axon. It localises to the cytoplasm. The protein resides in the cytosol. Its function is as follows. Exhibits microtubule-destabilizing activity, which is antagonized by STAT3. The sequence is that of Stathmin-3 (STMN3) from Macaca fascicularis (Crab-eating macaque).